The chain runs to 660 residues: Probable beta-hexosaminidase fdl (660 aa).

The signal sequence occupies residues methionine 1–alanine 36. Asparagine 210, asparagine 412, and asparagine 452 each carry an N-linked (GlcNAc...) asparagine glycan.

The protein belongs to the glycosyl hydrolase 20 family. In terms of tissue distribution, in third instar larval and early pupal brains, expressed in cells sending projections across the interhemispheric junction. In adult brain, expressed in mushroom body, ellipsoid body and pars intercerebralis.

The catalysed reaction is Hydrolysis of terminal non-reducing N-acetyl-D-hexosamine residues in N-acetyl-beta-D-hexosaminides.. In terms of biological role, involved in brain restructurization via hormonal control during metamorphosis. Implicated in N-glycan processing. The chain is Probable beta-hexosaminidase fdl (fdl) from Drosophila melanogaster (Fruit fly).